A 422-amino-acid chain; its full sequence is Tyrosine--tRNA ligase (422 aa).

An L-tyrosine-binding site is contributed by Tyr35. Residues 40 to 49 (PTADSLHIGH) carry the 'HIGH' region motif. Positions 170 and 174 each coordinate L-tyrosine. A 'KMSKS' region motif is present at residues 232–236 (KFGKT). Lys235 is an ATP binding site. An S4 RNA-binding domain is found at 355–421 (LTLVDLLVES…GKKKYFLVTY (67 aa)).

The protein belongs to the class-I aminoacyl-tRNA synthetase family. TyrS type 1 subfamily. In terms of assembly, homodimer.

Its subcellular location is the cytoplasm. It carries out the reaction tRNA(Tyr) + L-tyrosine + ATP = L-tyrosyl-tRNA(Tyr) + AMP + diphosphate + H(+). Functionally, catalyzes the attachment of tyrosine to tRNA(Tyr) in a two-step reaction: tyrosine is first activated by ATP to form Tyr-AMP and then transferred to the acceptor end of tRNA(Tyr). The chain is Tyrosine--tRNA ligase from Bacillus pumilus (strain SAFR-032).